A 201-amino-acid chain; its full sequence is Transgelin (201 aa).

Ala-2 bears the N-acetylalanine mark. In terms of domain architecture, Calponin-homology (CH) spans 24–137 (EELEERLVEW…RTLMALGSLA (114 aa)). Phosphoserine is present on Ser-166. Lys-172 is subject to N6-acetyllysine. The Calponin-like repeat unit spans residues 175–200 (IGLQMGSNRGASQAGMTGYGRPRQII). Phosphoserine is present on Ser-181. Position 183 is an omega-N-methylarginine (Arg-183).

The protein belongs to the calponin family.

The protein localises to the cytoplasm. Functionally, actin cross-linking/gelling protein. Involved in calcium interactions and contractile properties of the cell that may contribute to replicative senescence. The polypeptide is Transgelin (TAGLN) (Homo sapiens (Human)).